The sequence spans 441 residues: Tubulin beta-1 chain (441 aa).

GTP-binding residues include Q11, E69, S138, G142, T143, G144, N204, and N226. E69 is a Mg(2+) binding site.

It belongs to the tubulin family. In terms of assembly, dimer of alpha and beta chains. A typical microtubule is a hollow water-filled tube with an outer diameter of 25 nm and an inner diameter of 15 nM. Alpha-beta heterodimers associate head-to-tail to form protofilaments running lengthwise along the microtubule wall with the beta-tubulin subunit facing the microtubule plus end conferring a structural polarity. Microtubules usually have 13 protofilaments but different protofilament numbers can be found in some organisms and specialized cells. Mg(2+) is required as a cofactor. Expressed primarily in touch receptor neurons.

The protein resides in the cytoplasm. Its subcellular location is the cytoskeleton. Tubulin is the major constituent of microtubules, a cylinder consisting of laterally associated linear protofilaments composed of alpha- and beta-tubulin heterodimers. Microtubules grow by the addition of GTP-tubulin dimers to the microtubule end, where a stabilizing cap forms. Below the cap, tubulin dimers are in GDP-bound state, owing to GTPase activity of alpha-tubulin. Plays a role in mechanosensory transduction (touch sensitivity). Functionally, mec-7 beta-tubulin is required for the production of 15-protofilament microtubules. The chain is Tubulin beta-1 chain (mec-7) from Caenorhabditis briggsae.